Consider the following 164-residue polypeptide: CB1 cannabinoid receptor-interacting protein 1 (164 aa).

Belongs to the CNRIP family. As to quaternary structure, interacts with the cannabinoid receptor CNR1 (via C-terminus). Does not interact with cannabinoid receptor CNR2.

Its function is as follows. Suppresses cannabinoid receptor CNR1-mediated tonic inhibition of voltage-gated calcium channels. The polypeptide is CB1 cannabinoid receptor-interacting protein 1 (CNRIP1) (Bos taurus (Bovine)).